The sequence spans 245 residues: tRNA pseudouridine synthase A (245 aa).

The Nucleophile role is filled by D52. Y111 is a binding site for substrate.

Belongs to the tRNA pseudouridine synthase TruA family. Homodimer.

It carries out the reaction uridine(38/39/40) in tRNA = pseudouridine(38/39/40) in tRNA. In terms of biological role, formation of pseudouridine at positions 38, 39 and 40 in the anticodon stem and loop of transfer RNAs. This is tRNA pseudouridine synthase A from Rickettsia bellii (strain RML369-C).